A 254-amino-acid polypeptide reads, in one-letter code: Glutamate racemase (254 aa).

Residues 7 to 8 and 39 to 40 each bind substrate; these read DS and YG. Cys-70 serves as the catalytic Proton donor/acceptor. Residues 71–72 and Glu-147 contribute to the substrate site; that span reads NT. Catalysis depends on Cys-178, which acts as the Proton donor/acceptor. A substrate-binding site is contributed by 179-180; it reads TH.

It belongs to the aspartate/glutamate racemases family. Homodimer.

The catalysed reaction is L-glutamate = D-glutamate. It functions in the pathway cell wall biogenesis; peptidoglycan biosynthesis. In terms of biological role, provides the (R)-glutamate required for cell wall biosynthesis. Converts L- or D-glutamate to D- or L-glutamate, respectively, but not other amino acids such as alanine, aspartate, and glutamine. This is Glutamate racemase from Aquifex pyrophilus.